Reading from the N-terminus, the 300-residue chain is Platelet-derived growth factor D (300 aa).

Residues 1–114 (QVTGNGHVQS…PGFKIYYSFV (114 aa)) form the CUB domain. C53 and C75 are oxidised to a cystine. Residue N220 is glycosylated (N-linked (GlcNAc...) asparagine).

It belongs to the PDGF/VEGF growth factor family. In terms of assembly, homodimer; disulfide-linked. Interacts with PDGFRB homodimers, and with heterodimers formed by PDGFRA and PDGFRB. Activated by proteolytic cleavage. Proteolytic removal of the N-terminal CUB domain releasing the core domain is necessary for unmasking the receptor-binding epitopes of the core domain. Cleavage after Arg-191 or Arg-193 by urokinase plasminogen activator gives rise to the active form.

The protein resides in the secreted. In terms of biological role, growth factor that plays an essential role in the regulation of embryonic development, cell proliferation, cell migration, survival and chemotaxis. Potent mitogen for cells of mesenchymal origin. Plays an important role in wound healing. Induces macrophage recruitment, increased interstitial pressure, and blood vessel maturation during angiogenesis. Can initiate events that lead to a mesangial proliferative glomerulonephritis, including influx of monocytes and macrophages and production of extracellular matrix. The chain is Platelet-derived growth factor D (PDGFD) from Oryctolagus cuniculus (Rabbit).